Here is a 424-residue protein sequence, read N- to C-terminus: Serine--tRNA ligase (424 aa).

Residue 232 to 234 (TAE) coordinates L-serine. Position 263-265 (263-265 (RKE)) interacts with ATP. Glu-286 lines the L-serine pocket. Position 350–353 (350–353 (EISS)) interacts with ATP. Ser-386 provides a ligand contact to L-serine.

Belongs to the class-II aminoacyl-tRNA synthetase family. Type-1 seryl-tRNA synthetase subfamily. Homodimer. The tRNA molecule binds across the dimer.

It localises to the cytoplasm. The catalysed reaction is tRNA(Ser) + L-serine + ATP = L-seryl-tRNA(Ser) + AMP + diphosphate + H(+). It catalyses the reaction tRNA(Sec) + L-serine + ATP = L-seryl-tRNA(Sec) + AMP + diphosphate + H(+). Its pathway is aminoacyl-tRNA biosynthesis; selenocysteinyl-tRNA(Sec) biosynthesis; L-seryl-tRNA(Sec) from L-serine and tRNA(Sec): step 1/1. In terms of biological role, catalyzes the attachment of serine to tRNA(Ser). Is also able to aminoacylate tRNA(Sec) with serine, to form the misacylated tRNA L-seryl-tRNA(Sec), which will be further converted into selenocysteinyl-tRNA(Sec). The protein is Serine--tRNA ligase of Thermodesulfovibrio yellowstonii (strain ATCC 51303 / DSM 11347 / YP87).